Consider the following 266-residue polypeptide: RNA polymerase II subunit A C-terminal domain phosphatase ssu-72 (266 aa).

Residues 1-31 form a disordered region; sequence MSAVDTPTGAASSSKPDQNEQNGQNGGREDS. Polar residues predominate over residues 9-23; sequence GAASSSKPDQNEQNG.

It belongs to the SSU72 phosphatase family. In terms of assembly, component of the cleavage and polyadenylation factor (CPF) complex.

Its subcellular location is the nucleus. The catalysed reaction is O-phospho-L-seryl-[protein] + H2O = L-seryl-[protein] + phosphate. It catalyses the reaction O-phospho-L-threonyl-[protein] + H2O = L-threonyl-[protein] + phosphate. Processively dephosphorylates Ser-5 of the heptad repeats YSPTSPS in the C-terminal domain of the largest RNA polymerase II subunit (rpb-1). Functionally, component of the cleavage and polyadenylation factor (CPF) complex, which plays a key role in polyadenylation-dependent pre-mRNA 3'-end formation and cooperates with cleavage factors including the CFIA complex and NAB4/CFIB. Ssu-72 is required for 3'-end formation of snoRNAs. In Neurospora crassa (strain ATCC 24698 / 74-OR23-1A / CBS 708.71 / DSM 1257 / FGSC 987), this protein is RNA polymerase II subunit A C-terminal domain phosphatase ssu-72 (ssu-72).